Reading from the N-terminus, the 367-residue chain is Apolipoprotein A-V (367 aa).

A signal peptide spans 1 to 20; that stretch reads MVAVLTWALALLSAFATAQT. S56 is subject to Phosphoserine.

It belongs to the apolipoprotein A1/A4/E family. Interacts with GPIHBP1. Interacts with SORL1; this interaction leads to APOA5 internalization and sorting either to lysosomes and degradation, or to the trans-Golgi network. Phosphorylated by FAM20C in the extracellular medium.

It is found in the secreted. Its subcellular location is the early endosome. It localises to the late endosome. The protein resides in the golgi apparatus. The protein localises to the trans-Golgi network. Minor apolipoprotein mainly associated with HDL and to a lesser extent with VLDL. May also be associated with chylomicrons. Important determinant of plasma triglyceride (TG) levels by both being a potent stimulator of apo-CII lipoprotein lipase (LPL) TG hydrolysis and an inhibitor of the hepatic VLDL-TG production rate (without affecting the VLDL-apoB production rate). Activates poorly lecithin:cholesterol acyltransferase (LCAT) and does not enhance efflux of cholesterol from macrophages. Binds heparin. The polypeptide is Apolipoprotein A-V (APOA5) (Phoca vitulina (Harbor seal)).